We begin with the raw amino-acid sequence, 74 residues long: NADH dehydrogenase [ubiquinone] 1 alpha subcomplex assembly factor 8 (74 aa).

Positions 22 to 69 (LAACGAEASAYGKCVQASTAPGGRLSKDLCVREFEALRSCFAAAAKKT) constitute a CHCH domain. Short sequence motifs (cx9C motif) lie at residues 25-35 (CGAEASAYGKC) and 51-61 (CVREFEALRSC). Cystine bridges form between C25–C61 and C35–C51.

Interacts with NDUFAF5.

Its subcellular location is the mitochondrion. Functionally, involved in the assembly of mitochondrial NADH:ubiquinone oxidoreductase complex (complex I, MT-ND1). Required to stabilize NDUFAF5. The protein is NADH dehydrogenase [ubiquinone] 1 alpha subcomplex assembly factor 8 of Mus musculus (Mouse).